Here is a 391-residue protein sequence, read N- to C-terminus: Tryptophan synthase beta chain 2 (391 aa).

Position 83 is an N6-(pyridoxal phosphate)lysine (K83).

It belongs to the TrpB family. In terms of assembly, tetramer of two alpha and two beta chains. Pyridoxal 5'-phosphate serves as cofactor.

It carries out the reaction (1S,2R)-1-C-(indol-3-yl)glycerol 3-phosphate + L-serine = D-glyceraldehyde 3-phosphate + L-tryptophan + H2O. It participates in amino-acid biosynthesis; L-tryptophan biosynthesis; L-tryptophan from chorismate: step 5/5. The beta subunit is responsible for the synthesis of L-tryptophan from indole and L-serine. The chain is Tryptophan synthase beta chain 2 (trpB2) from Chlamydia caviae (strain ATCC VR-813 / DSM 19441 / 03DC25 / GPIC) (Chlamydophila caviae).